Here is a 1190-residue protein sequence, read N- to C-terminus: MQKSVRYNEGHALYLAFLARKEGTKRGFLSKKAAEASRWHEKWFALYQNVLFYFEGEQSGRPAGMYLLEGCSCERTPAPPRTNAGPAGARDALDKQYYFTVLFGHEGQKPLELRCEEEQAGKEWMEAIHQASYADILIEREVLMQKYIHLVQIVETEKIAANQLRHQLEDQDTEIERLKSEIVALNKTKERMRPYHTHQEEEDPDIKKIKKVQSFMRGWLCRRKWKTIVQDYICSPHAESMRKRNQIVFTMVEAESEYVHQLYILVNGFLRPLRMAASSKKPPISHDDVSSIFLNSETIMFLHEIFHQGLKARLANWPTLVLADLFDILLPMLNIYQEFVRNHQYSLQVLANCKQNRDFDKLLKQYEGNPACEGRMLETFLTYPMFQIPRYIITLHELLAHTPHEHVERKSLEFAKSKLEELSRVMHDEVSDTENIRKNLAIERMIVEGCDILLDTSQTFIRQGSLIQVPSVERGKLSKVRLGSLSLKKEGERQCFLFTKHFLICTRSSGGKLHLLKTGGVLSLIQCTLIEEPDTSDDDTKGPGHMFGHLDFKIVVEPPDAAPFTVVLLAPSRQEKAAWMSDISQCVDNIRCNGLMTIVFEENSKVTVPHMIKSDARLHKDDTDICFSKTLNSCKVPQIRYASVERLLERLTDLRFLSIDFLNTFLHTYRIFTTAAVVLGKLSDIYKRPFTSIPVRSLELFFATSQNNREHLVDGKSPRLCRKFSSPPPLAVSRTSSPVRARKLSLTSSLNSRIGALDLTTSSSSSSPTTTVHSPAASPPPHTAVPESAPADRAGDSTDMSPCRSPSTTPRHLRYRQPGGQVADSTHCAVSPASAFAIATAAAGHGSPPGFNNERTCDKEFIIRRTATNRVLNVLRHWVSKHSQDFELNNELKMNVLNLLEEVLRDPDLLPQERKATANILRALSQDDQDDIHLKLEDIIQMTDCPKAECFETLSAMELAEQITLLDHIVFRSIPYEEFLGQGWMKLDKNERTPYIMKTSQHFNEMSNLVASQIMNYADISSRANAIEKWVAVADICRCLHNYNGVLEITSALNRSAIYRLKKTWTKVSKQTKALMDKLQKTVSSEGRFKNLRETLKNCNPPAVPYLGMYLTDLAFIEEGTPNFTEEGLVNFSKMRMISHIIREIRQFQQTAYRIDQQPKVIQYLLDKALVIDEDTLYELSLKIEPRLPA.

The 112-residue stretch at 22 to 133 (EGTKRGFLSK…WMEAIHQASY (112 aa)) folds into the PH 1 domain. Positions 155 to 193 (ETEKIAANQLRHQLEDQDTEIERLKSEIVALNKTKERMR) form a coiled coil. The region spanning 205–234 (DIKKIKKVQSFMRGWLCRRKWKTIVQDYIC) is the IQ domain. The DH domain occupies 243-429 (KRNQIVFTMV…EELSRVMHDE (187 aa)). The PH 2 domain occupies 470-588 (PSVERGKLSK…WMSDISQCVD (119 aa)). The N-terminal Ras-GEF domain occupies 635 to 755 (KVPQIRYASV…LTSSLNSRIG (121 aa)). The interval 713–744 (VDGKSPRLCRKFSSPPPLAVSRTSSPVRARKL) is disordered. 2 positions are modified to phosphoserine: Ser725 and Ser726. Position 736 is a phosphoserine; by CDK5 (Ser736). Positions 743–751 (KLSLTSSLN) are regulates proteasomal degradation. A phosphoserine mark is found at Ser745 and Ser749. Residues 757-826 (LDLTTSSSSS…QPGGQVADST (70 aa)) form a disordered region. Low complexity predominate over residues 760 to 776 (TTSSSSSSPTTTVHSPA). A compositionally biased stretch (polar residues) spans 798–810 (TDMSPCRSPSTTP). Phosphoserine occurs at positions 801, 805, and 925. The region spanning 955-1187 (SAMELAEQIT…YELSLKIEPR (233 aa)) is the Ras-GEF domain. Residues 1052–1081 (ALNRSAIYRLKKTWTKVSKQTKALMDKLQK) form a responsible of the affinity for farnesylated versus geranylgeranylated Ras region.

Homooligomer and heterooligomer with RASGRF1. Interacts with Ras and RAC1. Interacts in a calcium-dependent manner with calmodulin. Interacts with CDK5R1 and probably EPB49. Interacts with the AMPA receptor through GRIA1. Interacts with microtubules. In terms of processing, phosphorylated by CDK5; down-regulates RASGRF2-mediated RAC1 activation. Ubiquitinated upon interaction with Ras. Ubiquitination leads to degradation through the 26S proteasome. Widely expressed. Detected in brain, lung, spleen, pancreas, kidney, liver, heart, mammary gland and skeletal muscle.

Its subcellular location is the cytoplasm. The protein localises to the cell membrane. It localises to the endoplasmic reticulum membrane. Its function is as follows. Functions as a calcium-regulated nucleotide exchange factor activating both Ras and RAC1 through the exchange of bound GDP for GTP. Preferentially activates HRAS in vivo compared to RRAS based on their different types of prenylation. Functions in synaptic plasticity by contributing to the induction of long term potentiation. This is Ras-specific guanine nucleotide-releasing factor 2 (Rasgrf2) from Rattus norvegicus (Rat).